Here is a 912-residue protein sequence, read N- to C-terminus: Probable dipeptidyl-aminopeptidase B (912 aa).

Disordered regions lie at residues methionine 1–leucine 30 and asparagine 48–aspartate 68. Residues methionine 1 to lysine 92 are Cytoplasmic-facing. Basic and acidic residues-rich tracts occupy residues glycine 7–aspartate 25 and threonine 54–serine 67. The chain crosses the membrane as a helical; Signal-anchor for type II membrane protein span at residues isoleucine 93–phenylalanine 113. The Vacuolar portion of the chain corresponds to leucine 114–isoleucine 912. Asparagine 130, asparagine 210, asparagine 346, asparagine 569, and asparagine 656 each carry an N-linked (GlcNAc...) asparagine glycan. Serine 751 acts as the Charge relay system in catalysis. Asparagine 810 carries N-linked (GlcNAc...) asparagine glycosylation. Active-site charge relay system residues include aspartate 828 and histidine 861. An N-linked (GlcNAc...) asparagine glycan is attached at asparagine 897.

Belongs to the peptidase S9B family.

It localises to the vacuole membrane. It catalyses the reaction Release of an N-terminal dipeptide, Xaa-Yaa-|-Zaa-, from a polypeptide, preferentially when Yaa is Pro, provided Zaa is neither Pro nor hydroxyproline.. Its function is as follows. Type IV dipeptidyl-peptidase which removes N-terminal dipeptides sequentially from polypeptides having unsubstituted N-termini provided that the penultimate residue is proline. The sequence is that of Probable dipeptidyl-aminopeptidase B (DAPB) from Paracoccidioides brasiliensis (strain Pb18).